The following is a 308-amino-acid chain: Glutaminase 1 (308 aa).

Substrate-binding residues include Ser-64, Asn-116, Glu-161, Asn-168, Tyr-192, Tyr-244, and Val-262.

This sequence belongs to the glutaminase family. In terms of assembly, homotetramer.

The enzyme catalyses L-glutamine + H2O = L-glutamate + NH4(+). The polypeptide is Glutaminase 1 (Halalkalibacterium halodurans (strain ATCC BAA-125 / DSM 18197 / FERM 7344 / JCM 9153 / C-125) (Bacillus halodurans)).